Here is a 261-residue protein sequence, read N- to C-terminus: Proteasome subunit beta type-2 (261 aa).

A propeptide spans 1–29 (MAGLSFDNYQRNNFLAENSHTQPKATSTG) (removed in mature form). The active-site Nucleophile is threonine 30.

The protein belongs to the peptidase T1B family. In terms of assembly, the 26S proteasome consists of a 20S proteasome core and two 19S regulatory subunits. The 20S proteasome core is composed of 28 subunits that are arranged in four stacked rings, resulting in a barrel-shaped structure. The two end rings are each formed by seven alpha subunits, and the two central rings are each formed by seven beta subunits. The catalytic chamber with the active sites is on the inside of the barrel.

The protein localises to the cytoplasm. The protein resides in the nucleus. It carries out the reaction Cleavage of peptide bonds with very broad specificity.. Its function is as follows. The proteasome degrades poly-ubiquitinated proteins in the cytoplasm and in the nucleus. It is essential for the regulated turnover of proteins and for the removal of misfolded proteins. The proteasome is a multicatalytic proteinase complex that is characterized by its ability to cleave peptides with Arg, Phe, Tyr, Leu, and Glu adjacent to the leaving group at neutral or slightly basic pH. It has an ATP-dependent proteolytic activity. The protein is Proteasome subunit beta type-2 (PUP1) of Saccharomyces cerevisiae (strain ATCC 204508 / S288c) (Baker's yeast).